A 447-amino-acid chain; its full sequence is Asparagine--tRNA ligase (447 aa).

Belongs to the class-II aminoacyl-tRNA synthetase family. In terms of assembly, homodimer.

The protein resides in the cytoplasm. The catalysed reaction is tRNA(Asn) + L-asparagine + ATP = L-asparaginyl-tRNA(Asn) + AMP + diphosphate + H(+). This chain is Asparagine--tRNA ligase, found in Lactococcus lactis subsp. cremoris (strain SK11).